A 372-amino-acid chain; its full sequence is N-acetyllactosaminide beta-1,3-N-acetylglucosaminyltransferase 3 (372 aa).

The Cytoplasmic segment spans residues 1–10; the sequence is MKYLRHRRPN. Residues 11–31 form a helical; Signal-anchor for type II membrane protein membrane-spanning segment; the sequence is ATLILAIGAFTLLLFSLLVSP. Over 32-372 the chain is Lumenal; sequence PTCKVQEQPP…LTCGNQTQIY (341 aa). N-linked (GlcNAc...) asparagine glycans are attached at residues asparagine 64, asparagine 184, asparagine 202, asparagine 362, and asparagine 367.

This sequence belongs to the glycosyltransferase 31 family. In terms of tissue distribution, expressed in colon, jejunum, stomach, esophagus, placenta and trachea.

It is found in the golgi apparatus membrane. The catalysed reaction is a 3-O-{beta-D-galactosyl-(1-&gt;3)-[N-acetyl-beta-D-glucosaminyl-(1-&gt;6)]-N-acetyl-alpha-D-galactosaminyl}-L-threonyl-[protein] + UDP-N-acetyl-alpha-D-glucosamine = 3-O-{beta-D-GlcNAc-(1-&gt;3)-beta-D-Gal-(1-&gt;3)-[beta-D-GlcNAc-(1-&gt;6)]-alpha-D-GalNAc}-L-threonyl-[protein] + UDP + H(+). It catalyses the reaction 3-O-{beta-D-galactosyl-(1-&gt;3)-[N-acetyl-beta-D-glucosaminyl-(1-&gt;6)]-N-acetyl-alpha-D-galactosaminyl}-L-seryl-[protein] + UDP-N-acetyl-alpha-D-glucosamine = 3-O-{beta-D-GlcNAc-(1-&gt;3)-beta-D-Gal-(1-&gt;3)-[beta-D-GlcNAc-(1-&gt;6)]-alpha-D-GalNAc}-L-seryl-[protein] + UDP + H(+). The enzyme catalyses a beta-D-galactosyl-(1-&gt;4)-N-acetyl-beta-D-glucosaminyl derivative + UDP-N-acetyl-alpha-D-glucosamine = an N-acetyl-beta-D-glucosaminyl-(1-&gt;3)-beta-D-galactosyl-(1-&gt;4)-N-acetyl-beta-D-glucosaminyl derivative + UDP + H(+). The protein operates within protein modification; protein glycosylation. Functionally, beta-1,3-N-acetylglucosaminyltransferase involved in the synthesis of poly-N-acetyllactosamine. Has activity for type 2 oligosaccharides. Also acts as a core1-1,3-N-acetylglucosaminyltransferase (Core1-beta3GlcNAcT) to form the 6-sulfo sialyl Lewis x on extended core1 O-glycans. In Homo sapiens (Human), this protein is N-acetyllactosaminide beta-1,3-N-acetylglucosaminyltransferase 3 (B3GNT3).